Reading from the N-terminus, the 126-residue chain is Large ribosomal subunit protein bL12 (126 aa).

Residues 97–126 (PQPVKSGVSKEEAEEAKKQLAESGAEVEVK) are disordered. The span at 104–116 (VSKEEAEEAKKQL) shows a compositional bias: basic and acidic residues.

Belongs to the bacterial ribosomal protein bL12 family. Homodimer. Part of the ribosomal stalk of the 50S ribosomal subunit. Forms a multimeric L10(L12)X complex, where L10 forms an elongated spine to which 2 to 4 L12 dimers bind in a sequential fashion. Binds GTP-bound translation factors.

Forms part of the ribosomal stalk which helps the ribosome interact with GTP-bound translation factors. Is thus essential for accurate translation. This Geotalea uraniireducens (strain Rf4) (Geobacter uraniireducens) protein is Large ribosomal subunit protein bL12.